The chain runs to 817 residues: LisH domain-containing protein ARMC9 (817 aa).

The 33-residue stretch at 15 to 47 folds into the LisH domain; the sequence is SESDLLSMISEYLKFGEFEETARTFEKEVKRKG. 3 disordered regions span residues 580–605, 610–629, and 642–817; these read SATI…EEDV, LDKE…ESLL, and KTKR…SNRK. Positions 586–605 are enriched in acidic residues; that stretch reads QEPESDDEEDEDDDDDEEDV. 2 stretches are compositionally biased toward polar residues: residues 692-715 and 740-750; these read SSRP…TLAT and GQTTNSVQSYS. The span at 805 to 817 shows a compositional bias: low complexity; the sequence is GRPSQQSSQSNRK.

As to expression, expressed in multiple CNS regions, including the cerebellum, all periventricular regions, and all layers of the retina.

Its subcellular location is the cytoplasm. It localises to the cytoskeleton. It is found in the cilium basal body. The protein localises to the cell projection. The protein resides in the cilium. Its subcellular location is the microtubule organizing center. It localises to the centrosome. It is found in the centriole. Functionally, involved in ciliogenesis. It is required for appropriate acetylation and polyglutamylation of ciliary microtubules, and regulation of cilium length. Acts as a positive regulator of hedgehog (Hh) signaling. In Danio rerio (Zebrafish), this protein is LisH domain-containing protein ARMC9 (armc9).